The chain runs to 382 residues: Protein phosphatase 1A (382 aa).

Residue Gly2 is the site of N-myristoyl glycine attachment. The PPM-type phosphatase domain maps to 23-291 (RYGLSSMQGW…DNMSVILICF (269 aa)). 4 residues coordinate Mn(2+): Asp60, Gly61, Asp239, and Asp282. Phosphoserine is present on residues Ser375 and Ser377.

This sequence belongs to the PP2C family. Monomer. Interacts with SMAD2; the interaction dephosphorylates SMAD2 in its C-terminal SXS motif resulting in disruption of the SMAD2/SMAD4 complex, SMAD2 nuclear export and termination of the TGF-beta-mediated signaling. Interacts with SMAD2; the interaction dephosphorylates SMAD2 in its C-terminal SXS motif resulting in disruption of the SMAD2/SMAD4 complex, SMAD2 nuclear export and termination of the TGF-beta-mediated signaling. Interacts with the phosphorylated form of IKBKB/IKKB. Mg(2+) serves as cofactor. Mn(2+) is required as a cofactor. N-myristoylation is essential for the recognition of its substrates for dephosphorylation.

The protein resides in the nucleus. Its subcellular location is the cytoplasm. It localises to the cytosol. It is found in the membrane. The enzyme catalyses O-phospho-L-seryl-[protein] + H2O = L-seryl-[protein] + phosphate. It catalyses the reaction O-phospho-L-threonyl-[protein] + H2O = L-threonyl-[protein] + phosphate. Enzyme with a broad specificity. Negatively regulates TGF-beta signaling through dephosphorylating SMAD2 and SMAD3, resulting in their dissociation from SMAD4, nuclear export of the SMADs and termination of the TGF-beta-mediated signaling. Dephosphorylates PRKAA1 and PRKAA2. Plays an important role in the termination of TNF-alpha-mediated NF-kappa-B activation through dephosphorylating and inactivating IKBKB/IKKB. The chain is Protein phosphatase 1A (PPM1A) from Bos taurus (Bovine).